The primary structure comprises 328 residues: Beta-ketoacyl-[acyl-carrier-protein] synthase III (328 aa).

Residues cysteine 122 and histidine 255 contribute to the active site. The segment at 256–260 (QANVR) is ACP-binding. Residue asparagine 285 is part of the active site.

It belongs to the thiolase-like superfamily. FabH family. Homodimer.

The protein resides in the cytoplasm. It catalyses the reaction malonyl-[ACP] + acetyl-CoA + H(+) = 3-oxobutanoyl-[ACP] + CO2 + CoA. Its pathway is lipid metabolism; fatty acid biosynthesis. Functionally, catalyzes the condensation reaction of fatty acid synthesis by the addition to an acyl acceptor of two carbons from malonyl-ACP. Catalyzes the first condensation reaction which initiates fatty acid synthesis and may therefore play a role in governing the total rate of fatty acid production. Possesses both acetoacetyl-ACP synthase and acetyl transacylase activities. Its substrate specificity determines the biosynthesis of branched-chain and/or straight-chain of fatty acids. This Bordetella avium (strain 197N) protein is Beta-ketoacyl-[acyl-carrier-protein] synthase III.